The following is a 28-amino-acid chain: Sarcolamban A (28 aa).

A helical transmembrane segment spans residues 7-27 (LFTTFGILAILLFFLYLIYAV).

In terms of assembly, interacts with SERCA. As to expression, strongly expressed in embryonic and larval somatic muscles and postembryonic heart.

The protein localises to the sarcoplasmic reticulum membrane. Its subcellular location is the cell membrane. The protein resides in the sarcolemma. It is found in the T-tubule. Its function is as follows. Plays an essential role in the regulation of calcium transport at the sarcoplasmic reticulum (SR), which is secondarily required for regular muscle contraction. This is Sarcolamban A from Drosophila melanogaster (Fruit fly).